The chain runs to 491 residues: Chromosomal replication initiator protein DnaA (491 aa).

The interval 1–69 is domain I, interacts with DnaA modulators; the sequence is MTTWNKCLKK…TIQEFHDGDL (69 aa). The tract at residues 69 to 154 is domain II; that stretch reads LLIEYSNKKF…KDDQEYSFGL (86 aa). A disordered region spans residues 106 to 126; that stretch reads DSEETSLNQEPKKSQKKLSSK. Positions 155–371 are domain III, AAA+ region; it reads PLKEKYVFDS…GALNRVLTTS (217 aa). The ATP site is built by G199, G201, K202, and T203. A domain IV, binds dsDNA region spans residues 372–491; sequence KFNHKDPTIE…YELLLDKISR (120 aa).

It belongs to the DnaA family. Oligomerizes as a right-handed, spiral filament on DNA at oriC.

It is found in the cytoplasm. In terms of biological role, plays an essential role in the initiation and regulation of chromosomal replication. ATP-DnaA binds to the origin of replication (oriC) to initiate formation of the DNA replication initiation complex once per cell cycle. Binds the DnaA box (a 9 base pair repeat at the origin) and separates the double-stranded (ds)DNA. Forms a right-handed helical filament on oriC DNA; dsDNA binds to the exterior of the filament while single-stranded (ss)DNA is stabiized in the filament's interior. The ATP-DnaA-oriC complex binds and stabilizes one strand of the AT-rich DNA unwinding element (DUE), permitting loading of DNA polymerase. After initiation quickly degrades to an ADP-DnaA complex that is not apt for DNA replication. Binds acidic phospholipids. The chain is Chromosomal replication initiator protein DnaA from Francisella philomiragia subsp. philomiragia (strain ATCC 25017 / CCUG 19701 / FSC 153 / O#319-036).